We begin with the raw amino-acid sequence, 1402 residues long: Erbin (1402 aa).

17 LRR repeats span residues 23 to 44 (TVTT…IFTF), 47 to 68 (TLEE…LFNC), 70 to 91 (SLHK…IANL), 93 to 114 (NLRE…IKNC), 116 to 137 (VLTI…FSQL), 139 to 161 (NLTQ…GRLT), 162 to 183 (KLQI…MNRL), 185 to 206 (QLER…LEQL), 208 to 229 (GLRE…IGSL), 231 to 252 (QLTY…ISTC), 254 to 275 (NLQD…IGSL), 277 to 298 (NVTT…IGGL), 300 to 321 (SIEE…IGQL), 323 to 344 (NMRT…IGNW), 346 to 367 (NITV…MGDM), 369 to 391 (KLKV…TKLQ), and 392 to 413 (QLTA…QKET). Phosphoserine occurs at positions 440 and 444. 2 disordered regions span residues 465-489 (DEDK…PYPD) and 507-543 (DEET…TTKS). Positions 470-480 (EREAPPREGNL) are enriched in basic and acidic residues. Residue Y483 is modified to Phosphotyrosine. T485 carries the post-translational modification Phosphothreonine. Residues 507 to 534 (DEETNEESGRDLKQHEDQQVVNKDKCVK) are compositionally biased toward basic and acidic residues. Phosphoserine occurs at positions 595, 599, 600, and 617. The span at 629–638 (NKKDDAKDAD) shows a compositional bias: basic and acidic residues. The segment at 629-694 (NKKDDAKDAD…PVDSNSKVRQ (66 aa)) is disordered. Over residues 647–659 (NSNQNNSNCSSPS) the composition is skewed to low complexity. Residues 660–689 (RMSDSVSLNTDSSQDTSLCSPVKQTPVDSN) are compositionally biased toward polar residues. 4 positions are modified to phosphoserine: S712, S849, S854, and S869. Positions 824-864 (EDTAPSPGRVEPQKASSSADVGISKSTEDLSPQRSGPTGAV) are disordered. Residue T914 is modified to Phosphothreonine. Y917 carries the post-translational modification Phosphotyrosine. S928 bears the Phosphoserine mark. Y970 carries the phosphotyrosine modification. Disordered regions lie at residues 990-1018 (WHPK…ENHS) and 1070-1093 (TTIQ…TRRT). Positions 1070–1084 (TTIQRQSSVSSTASV) are enriched in polar residues. At Y1097 the chain carries Phosphotyrosine. Disordered regions lie at residues 1107-1187 (GRTP…VPHD), 1198-1217 (AKKL…CQDD), and 1222-1274 (EEQN…VARH). Composition is skewed to polar residues over residues 1128–1139 (GPNTSRPQSARP) and 1149–1164 (MSVS…PSKR). Phosphoserine occurs at positions 1150 and 1171. Phosphoserine is present on residues L1231, R1234, and S1276. In terms of domain architecture, PDZ spans 1311-1400 (EIRVRVEKDP…AVDLIIVREV (90 aa)).

It belongs to the LAP (LRR and PDZ) protein family. As to quaternary structure, interacts with ERBB2, BPAG1 and ITGB4. May favor the localization of ERBB2, by restricting its presence to the basolateral membrane of epithelial cells. Also found to interact with ARVCF and delta catenin. Interacts (via C-terminus) with DST (via N-terminus). Interacts with NOD2 (via CARD domain). Isoform 2 is phosphorylated on Ser-1231 and Ser-1234.

Its subcellular location is the cell junction. It is found in the hemidesmosome. It localises to the nucleus membrane. The protein resides in the basolateral cell membrane. Acts as an adapter for the receptor ERBB2, in epithelia. By binding the unphosphorylated ERBB2 'Tyr-1248' receptor, it may contribute to stabilize this unphosphorylated state. Inhibits NOD2-dependent NF-kappa-B signaling and pro-inflammatory cytokine secretion. In Mus musculus (Mouse), this protein is Erbin.